A 383-amino-acid polypeptide reads, in one-letter code: GTP-binding protein 10 homolog (383 aa).

The region spanning 22-157 is the Obg domain; it reads PTFLDTLRLA…RTVNLDLKLI (136 aa). The region spanning 158-353 is the OBG-type G domain; it reads ADVGLVGFPN…VKSQLRRTLV (196 aa). GTP contacts are provided by residues 164–171, 211–215, and 287–290; these read GFPNAGKS, DLPGL, and NKMD.

This sequence belongs to the TRAFAC class OBG-HflX-like GTPase superfamily. OBG GTPase family.

The protein resides in the nucleus. The protein localises to the nucleolus. May be involved in the ribosome maturation process. This is GTP-binding protein 10 homolog from Drosophila melanogaster (Fruit fly).